Consider the following 206-residue polypeptide: Large ribosomal subunit protein uL3 (206 aa).

Positions 126-155 (HGHAGGPGAHGSRFHRHPGSMGANSTPSRV) are disordered.

Belongs to the universal ribosomal protein uL3 family. As to quaternary structure, part of the 50S ribosomal subunit. Forms a cluster with proteins L14 and L19.

Its function is as follows. One of the primary rRNA binding proteins, it binds directly near the 3'-end of the 23S rRNA, where it nucleates assembly of the 50S subunit. The sequence is that of Large ribosomal subunit protein uL3 from Leptospira interrogans serogroup Icterohaemorrhagiae serovar copenhageni (strain Fiocruz L1-130).